A 74-amino-acid polypeptide reads, in one-letter code: Major structural pilin EpdE (74 aa).

A propeptide spanning residues 1-12 (MKFLEKLTSKKG) is cleaved from the precursor. At glutamine 13 the chain carries Pyrrolidone carboxylic acid. Positions 13 to 21 (QIAMELGIL) match the QXSXEXXXL motif.

The N-terminus is cleaved by the prepilin peptidase EppA, which recognizes the class III signal sequence. Post-translationally, N-glycosylated. Glycosylated with an N-linked branched pentasaccharide glycan. May contain glycans at three sites. Glycosylation is AglB-dependent. The N-glycosylation does not occur unless the signal peptide has been cleaved first.

Its subcellular location is the secreted. The protein localises to the cell surface. The protein resides in the fimbrium. Its function is as follows. Major component of the type IV-like pili. This chain is Major structural pilin EpdE, found in Methanococcus maripaludis (strain DSM 14266 / JCM 13030 / NBRC 101832 / S2 / LL).